Reading from the N-terminus, the 447-residue chain is Peptide chain release factor 1, mitochondrial (447 aa).

The N-terminal 63 residues, 1-63 (MNRRHLFAWL…LLNKNCSRRY (63 aa)), are a transit peptide targeting the mitochondrion. The GGQ domain stretch occupies residues 299–363 (PKDLRIDTFR…LRARLYQQII (65 aa)). The short motif at 313 to 315 (GGQ) is the GGQ element. Glutamine 315 bears the N5-methylglutamine mark.

The protein belongs to the prokaryotic/mitochondrial release factor family. Methylation of glutamine in the GGQ triplet by HEMK1 is conserved from bacteria to mammals.

The protein localises to the mitochondrion. Mitochondrial peptide chain release factor that directs the termination of translation in response to the peptide chain non-canonical stop codons AGG and AGA. Non-canonical termination codons AGG and AGA are found at the end of MT-CO1/COX1 and MT-ND6/ND6 open reading frames, respectively. Recognizes non-canonical stop codons via a network of interactions between the codon, MTRF1 and the ribosomal RNA (rRNA): in contrast to other translation release factors, which identify the codon in the A-site via direct interactions of amino acid side chains with the bases, MTRF1 repositions the first 2 bases of the stop codon to use an intricate network of interactions that includes residues of the release factor, the rRNA of the small ribosomal subunit, as well as neighboring bases of the mRNA. The sequence is that of Peptide chain release factor 1, mitochondrial (MTRF1) from Bos taurus (Bovine).